Here is a 132-residue protein sequence, read N- to C-terminus: Small ribosomal subunit protein uS19 (132 aa).

The protein belongs to the universal ribosomal protein uS19 family.

In terms of biological role, protein S19 forms a complex with S13 that binds strongly to the 16S ribosomal RNA. The polypeptide is Small ribosomal subunit protein uS19 (rps19) (Pyrococcus horikoshii (strain ATCC 700860 / DSM 12428 / JCM 9974 / NBRC 100139 / OT-3)).